Consider the following 208-residue polypeptide: Probable GTP-binding protein EngB (208 aa).

In terms of domain architecture, EngB-type G spans 23–205 (LTSEMVILGR…RQTLLKYLLT (183 aa)). Residues 31-38 (GRSNVGKS), 57-61 (GKTRL), 84-87 (DLPG), 154-157 (TKFD), and 182-184 (FNA) each bind GTP. Positions 38 and 59 each coordinate Mg(2+).

This sequence belongs to the TRAFAC class TrmE-Era-EngA-EngB-Septin-like GTPase superfamily. EngB GTPase family. Mg(2+) serves as cofactor.

Its function is as follows. Necessary for normal cell division and for the maintenance of normal septation. The sequence is that of Probable GTP-binding protein EngB from Helicobacter pylori (strain P12).